Here is a 71-residue protein sequence, read N- to C-terminus: DNA-directed RNA polymerase subunit omega (71 aa).

The protein belongs to the RNA polymerase subunit omega family. As to quaternary structure, the RNAP catalytic core consists of 2 alpha, 1 beta, 1 beta' and 1 omega subunit. When a sigma factor is associated with the core the holoenzyme is formed, which can initiate transcription.

It carries out the reaction RNA(n) + a ribonucleoside 5'-triphosphate = RNA(n+1) + diphosphate. In terms of biological role, promotes RNA polymerase assembly. Latches the N- and C-terminal regions of the beta' subunit thereby facilitating its interaction with the beta and alpha subunits. The sequence is that of DNA-directed RNA polymerase subunit omega from Azoarcus sp. (strain BH72).